A 550-amino-acid chain; its full sequence is Envelope glycoprotein E (550 aa).

Residues 1 to 20 (MDRGAVVGFLLGVCVVSCLA) form the signal peptide. The Virion surface segment spans residues 21–419 (GTPKTSWRRV…HAPPTHGALR (399 aa)). Positions 63–88 (CGPLHPSWVSLMPPKQVPETVVDAAC) are interaction with gI. N-linked (GlcNAc...) asparagine; by host glycosylation is present at Asn-124. Residues 162 to 214 (QPAPVPTPPPTPADYDEDDNDEGEDESLAGTPASGTPRLPPPPAPPRSWPSAP) are disordered. Positions 164–173 (APVPTPPPTP) are enriched in pro residues. Acidic residues predominate over residues 175 to 188 (DYDEDDNDEGEDES). Sulfotyrosine; by host is present on Tyr-176. Residues 199 to 209 (RLPPPPAPPRS) show a composition bias toward pro residues. The fc-binding stretch occupies residues 235–380 (SPGETFSTNV…GHITISTAAQ (146 aa)). Residue Asn-243 is glycosylated (N-linked (GlcNAc...) asparagine; by host). Intrachain disulfides connect Cys-271-Cys-297, Cys-280-Cys-289, and Cys-314-Cys-323. Residues 394-413 (GADLAEPTHPHVGAPPHAPP) are disordered. Over residues 403 to 413 (PHVGAPPHAPP) the composition is skewed to low complexity. The chain crosses the membrane as a helical span at residues 420–440 (LGAVMGAALLLSALGLSVWAC). At 441 to 550 (MTCWRRRAWR…SQASDSSVFW (110 aa)) the chain is on the intravirion side. 2 consecutive short sequence motifs (internalization motif) follow at residues 463-466 (YIRV) and 472-475 (YADW). The interval 470–495 (ELYADWSSDSEGERDQVPWLAPPERP) is interaction with VP22 and UL11. 2 positions are modified to phosphoserine; by host CK2: Ser-476 and Ser-477. Positions 476–484 (SSDSEGERD) are acidic. Positions 476–550 (SSDSEGERDQ…SQASDSSVFW (75 aa)) are disordered. Ser-503 carries the phosphoserine modification. Residues 541 to 550 (SQASDSSVFW) are compositionally biased toward polar residues.

This sequence belongs to the alphaherpesvirinae glycoprotein E family. Interacts with gI; this interaction enhances the Fc receptor function of gE. The heterodimer gE/gI interacts with the Fc part of host IgG. Interacts (via C-terminus) with VP22 tegument protein; this interaction is necessary for the recruitment of VP22 to the Golgi and its packaging into virions. Interacts (via C-terminus) with UL11 tegument protein. In terms of processing, phosphorylated on serines within the acidic cluster. Phosphorylation determines whether endocytosed viral gE traffics to the trans-Golgi network or recycles to the cell membrane. Post-translationally, N-glycosylated, and sulfated.

It is found in the virion membrane. The protein localises to the host cell membrane. The protein resides in the host cell junction. Its subcellular location is the host Golgi apparatus membrane. It localises to the host endosome membrane. Functionally, in epithelial cells, the heterodimer gE/gI is required for the cell-to-cell spread of the virus, by sorting nascent virions to cell junctions. Once the virus reaches the cell junctions, virus particles can spread to adjacent cells extremely rapidly through interactions with cellular receptors that accumulate at these junctions. Implicated in basolateral spread in polarized cells. In neuronal cells, gE/gI is essential for the anterograde spread of the infection throughout the host nervous system. Together with US9, the heterodimer gE/gI is involved in the sorting and transport of viral structural components toward axon tips. The heterodimer gE/gI serves as a receptor for the Fc part of host IgG. Dissociation of gE/gI from IgG occurs at acidic pH. May thus be involved in anti-HSV antibodies bipolar bridging, followed by intracellular endocytosis and degradation, thereby interfering with host IgG-mediated immune responses. In Human herpesvirus 1 (strain 17) (HHV-1), this protein is Envelope glycoprotein E (gE).